Here is a 430-residue protein sequence, read N- to C-terminus: Carbamoyl phosphate synthase small chain, chloroplastic (430 aa).

The N-terminal 35 residues, 1 to 35, are a transit peptide targeting the chloroplast; the sequence is MAMATRTLGFVLPTSLSSQPSFDRRGGGFRVSVIR. The region spanning 243–429 is the Glutamine amidotransferase type-1 domain; sequence KVIAYDFGIK…IELMKRSKQS (187 aa). C318 (nucleophile) is an active-site residue. Catalysis depends on residues H402 and E404.

Belongs to the CarA family. Heterodimer composed of 2 chains; the small (or glutamine) chain promotes the hydrolysis of glutamine to ammonia, which is used by the large (or ammonia) chain to synthesize carbamoyl phosphate.

The protein localises to the plastid. It localises to the chloroplast. The enzyme catalyses hydrogencarbonate + L-glutamine + 2 ATP + H2O = carbamoyl phosphate + L-glutamate + 2 ADP + phosphate + 2 H(+). It catalyses the reaction L-glutamine + H2O = L-glutamate + NH4(+). It participates in amino-acid biosynthesis; L-arginine biosynthesis; carbamoyl phosphate from bicarbonate: step 1/1. It functions in the pathway pyrimidine metabolism; UMP biosynthesis via de novo pathway; (S)-dihydroorotate from bicarbonate: step 1/3. In terms of biological role, small subunit of the arginine-specific carbamoyl phosphate synthase (CPSase). CPSase catalyzes the formation of carbamoyl phosphate from the ammonia moiety of glutamine, carbonate, and phosphate donated by ATP, the first step of the arginine biosynthetic pathway. The small subunit (glutamine amidotransferase) binds and cleaves glutamine to supply the large subunit with the substrate ammonia. This is Carbamoyl phosphate synthase small chain, chloroplastic (CARA) from Arabidopsis thaliana (Mouse-ear cress).